A 680-amino-acid polypeptide reads, in one-letter code: tRNA 5-methylaminomethyl-2-thiouridine biosynthesis bifunctional protein MnmC (680 aa).

The tract at residues 1–267 is tRNA (mnm(5)s(2)U34)-methyltransferase; it reads MTAEPNKPCQ…MAAILSSDAP (267 aa). Residues 273–680 form an FAD-dependent cmnm(5)s(2)U34 oxidoreductase region; it reads IGGGLASAHL…LRKLLKGKSL (408 aa).

In the N-terminal section; belongs to the methyltransferase superfamily. tRNA (mnm(5)s(2)U34)-methyltransferase family. The protein in the C-terminal section; belongs to the DAO family. FAD is required as a cofactor.

The protein resides in the cytoplasm. It catalyses the reaction 5-aminomethyl-2-thiouridine(34) in tRNA + S-adenosyl-L-methionine = 5-methylaminomethyl-2-thiouridine(34) in tRNA + S-adenosyl-L-homocysteine + H(+). Its function is as follows. Catalyzes the last two steps in the biosynthesis of 5-methylaminomethyl-2-thiouridine (mnm(5)s(2)U) at the wobble position (U34) in tRNA. Catalyzes the FAD-dependent demodification of cmnm(5)s(2)U34 to nm(5)s(2)U34, followed by the transfer of a methyl group from S-adenosyl-L-methionine to nm(5)s(2)U34, to form mnm(5)s(2)U34. The chain is tRNA 5-methylaminomethyl-2-thiouridine biosynthesis bifunctional protein MnmC from Shewanella sp. (strain W3-18-1).